The primary structure comprises 402 residues: Imidazolonepropionase (402 aa).

Residues His-66 and His-68 each contribute to the Fe(3+) site. Zn(2+) contacts are provided by His-66 and His-68. The 4-imidazolone-5-propanoate site is built by Arg-75, Tyr-138, and His-171. N-formimidoyl-L-glutamate is bound at residue Tyr-138. His-236 serves as a coordination point for Fe(3+). His-236 provides a ligand contact to Zn(2+). Gln-239 lines the 4-imidazolone-5-propanoate pocket. Asp-311 contributes to the Fe(3+) binding site. Asp-311 contributes to the Zn(2+) binding site. N-formimidoyl-L-glutamate contacts are provided by Asn-313 and Gly-315. Thr-316 is a 4-imidazolone-5-propanoate binding site.

This sequence belongs to the metallo-dependent hydrolases superfamily. HutI family. It depends on Zn(2+) as a cofactor. The cofactor is Fe(3+).

Its subcellular location is the cytoplasm. The catalysed reaction is 4-imidazolone-5-propanoate + H2O = N-formimidoyl-L-glutamate. It participates in amino-acid degradation; L-histidine degradation into L-glutamate; N-formimidoyl-L-glutamate from L-histidine: step 3/3. In terms of biological role, catalyzes the hydrolytic cleavage of the carbon-nitrogen bond in imidazolone-5-propanoate to yield N-formimidoyl-L-glutamate. It is the third step in the universal histidine degradation pathway. The chain is Imidazolonepropionase from Pseudomonas paraeruginosa (strain DSM 24068 / PA7) (Pseudomonas aeruginosa (strain PA7)).